Consider the following 279-residue polypeptide: Pantothenate synthetase (279 aa).

M26–H33 contributes to the ATP binding site. Catalysis depends on H33, which acts as the Proton donor. Q57 is a (R)-pantoate binding site. Q57 serves as a coordination point for beta-alanine. G147–D150 is a binding site for ATP. Q153 lines the (R)-pantoate pocket. Residues I176 and E184–R187 each bind ATP.

Belongs to the pantothenate synthetase family. In terms of assembly, homodimer.

It localises to the cytoplasm. The enzyme catalyses (R)-pantoate + beta-alanine + ATP = (R)-pantothenate + AMP + diphosphate + H(+). It participates in cofactor biosynthesis; (R)-pantothenate biosynthesis; (R)-pantothenate from (R)-pantoate and beta-alanine: step 1/1. Catalyzes the condensation of pantoate with beta-alanine in an ATP-dependent reaction via a pantoyl-adenylate intermediate. This is Pantothenate synthetase from Corynebacterium glutamicum (strain R).